A 213-amino-acid chain; its full sequence is 24 kDa ookinete surface protein (213 aa).

Residues 1-28 (MNFKYSFIFLFFIQLAIRYNNAKITVDT) form the signal peptide. Positions 30–59 (CKGGKLIQMSNHYECKCPSGYALKTENTCE) constitute an EGF-like 1; truncated domain. 2 EGF-like domains span residues 60–108 (PIVK…NICK) and 108–148 (KPTR…GKCT). 6 disulfides stabilise this stretch: Cys64/Cys80, Cys74/Cys94, Cys96/Cys107, Cys112/Cys122, Cys117/Cys134, and Cys136/Cys147. Positions 151-175 (GETKCLLKCKAAEECKLTGKHYECV) constitute an EGF-like 4; truncated domain. Asn190 carries GPI-anchor amidated asparagine lipidation. N-linked (GlcNAc...) asparagine glycosylation occurs at Asn190. The propeptide at 191 to 213 (SSFMNGMSIISIIALLVIYVIVM) is removed in mature form.

It localises to the cell membrane. The chain is 24 kDa ookinete surface protein from Plasmodium berghei (strain Anka).